The sequence spans 229 residues: Ras-related protein Rab-33B (229 aa).

GTP contacts are provided by Asn-43, Val-44, Gly-45, Lys-46, Thr-47, Cys-48, Thr-62, and Thr-65. Position 47 (Thr-47) interacts with Mg(2+). Positions Gly-56–Val-68 match the Switch 1 motif. Positions 65 and 88 each coordinate Mg(2+). The short motif at Thr-89–His-108 is the Switch 2 element. Residues Gly-91, Asn-148, Lys-149, Asp-151, Ala-179, and Lys-180 each contribute to the GTP site. Residues Cys-227 and Cys-229 are each lipidated (S-geranylgeranyl cysteine). Position 229 is a cysteine methyl ester (Cys-229).

This sequence belongs to the small GTPase superfamily. Rab family. Interacts (GTP- and GDP-bound forms) with ATG16L1; the complex consists of a tetramer where two RAB33B molecules bind independently one molecule of the ATG16L1 homodimer; the interaction promotes ATG12-ATG5-ATG16L1 complex recruitment to phagophores. Interacts with ATG16L2; however interaction is approximately hundred times lower than for ATG16L1. Interacts with RIC1 (via C-terminus domain); the interaction is direct with a preference for RAB33B-GTP. Interacts with RGP1. Requires Mg(2+) as cofactor. Prenylated. In terms of tissue distribution, ubiquitous.

The protein localises to the golgi apparatus membrane. It localises to the golgi apparatus. It is found in the cis-Golgi network. Its subcellular location is the preautophagosomal structure membrane. It carries out the reaction GTP + H2O = GDP + phosphate + H(+). Regulated by guanine nucleotide exchange factors (GEFs) which promote the exchange of bound GDP for free GTP. Regulated by GTPase activating proteins (GAPs) such as SGSM2 which increase the GTP hydrolysis activity. Inhibited by GDP dissociation inhibitors (GDIs). The small GTPases Rab are key regulators of intracellular membrane trafficking, from the formation of transport vesicles to their fusion with membranes. Rabs cycle between an inactive GDP-bound form and an active GTP-bound form that is able to recruit to membranes different sets of downstream effectors directly responsible for vesicle formation, movement, tethering and fusion. RAB33B acts, in coordination with RAB6A, to regulate intra-Golgi retrograde trafficking. Participates in autophagosome formation by recruiting the ATG12-ATG5-ATG16L1 complex to phagophores, probably in a nucleotide-independent manner. This Mus musculus (Mouse) protein is Ras-related protein Rab-33B.